The primary structure comprises 532 residues: All-trans-retinyl ester 13-cis isomerohydrolase (532 aa).

Cysteine 112 is lipidated: S-palmitoyl cysteine; in membrane form. Fe cation-binding residues include histidine 180, histidine 241, and histidine 313. Cysteine 329 carries S-palmitoyl cysteine; in membrane form lipidation. Histidine 527 is a Fe cation binding site.

It belongs to the carotenoid oxygenase family. The cofactor is Fe(2+). In terms of processing, palmitoylated. In terms of tissue distribution, predominantly expressed in brain. Expressed at a low level in the eye.

The protein resides in the cytoplasm. The protein localises to the cell membrane. The catalysed reaction is an all-trans-retinyl ester + H2O = 13-cis-retinol + a fatty acid + H(+). It catalyses the reaction lutein = (3R,3'S)-zeaxanthin. Functionally, specifically generates 13-cis retinol, a stereoisomeric form of retinoic acid. Capable of catalyzing the isomerization of lutein to meso-zeaxanthin an eye-specific carotenoid. This is All-trans-retinyl ester 13-cis isomerohydrolase (rpe65b) from Danio rerio (Zebrafish).